The chain runs to 271 residues: Tumor necrosis factor receptor superfamily member 4 (271 aa).

Positions 1 to 19 (MYVWVQQPTAFLLLGLSLG) are cleaved as a signal peptide. Over 20–210 (VTVKLNCVKD…TPTLVAPEGP (191 aa)) the chain is Extracellular. 2 TNFR-Cys repeats span residues 25–60 (NCVK…TVCH) and 61–102 (PCEP…DTVC). Cystine bridges form between cysteine 26/cysteine 37, cysteine 38/cysteine 51, cysteine 41/cysteine 59, cysteine 62/cysteine 76, cysteine 79/cysteine 94, cysteine 82/cysteine 102, cysteine 104/cysteine 122, and cysteine 125/cysteine 138. The TNFR-Cys 3; truncated repeat unit spans residues 103 to 123 (QCRPGTQPRQDSSHKLGVDCV). A TNFR-Cys 4 repeat occupies 124–164 (PCPPGHFSPGSNQACKPWTNCTLSGKQIRHPASNSLDTVCE). N-linked (GlcNAc...) asparagine glycosylation is present at asparagine 143. Cysteines 144 and 163 form a disulfide. The chain crosses the membrane as a helical span at residues 211 to 235 (AFAVILGLGLGLLAPLTVLLALYLL). Residues 236-271 (RKAWRSPNTPKPCWGNSFRTPIQEEQTDTHFTLAKI) are Cytoplasmic-facing.

Interacts with TRAF2, TRAF3 and TRAF5. In terms of tissue distribution, activated T-cells.

Its subcellular location is the membrane. In terms of biological role, receptor for TNFSF4/OX40L/GP34. Is a costimulatory molecule implicated in long-term T-cell immunity. The sequence is that of Tumor necrosis factor receptor superfamily member 4 (Tnfrsf4) from Rattus norvegicus (Rat).